Consider the following 235-residue polypeptide: Phosphoribosylaminoimidazole-succinocarboxamide synthase (235 aa).

The protein belongs to the SAICAR synthetase family.

It catalyses the reaction 5-amino-1-(5-phospho-D-ribosyl)imidazole-4-carboxylate + L-aspartate + ATP = (2S)-2-[5-amino-1-(5-phospho-beta-D-ribosyl)imidazole-4-carboxamido]succinate + ADP + phosphate + 2 H(+). It participates in purine metabolism; IMP biosynthesis via de novo pathway; 5-amino-1-(5-phospho-D-ribosyl)imidazole-4-carboxamide from 5-amino-1-(5-phospho-D-ribosyl)imidazole-4-carboxylate: step 1/2. The sequence is that of Phosphoribosylaminoimidazole-succinocarboxamide synthase from Streptococcus mutans serotype c (strain ATCC 700610 / UA159).